A 94-amino-acid chain; its full sequence is Long neurotoxin LNTX8 (94 aa).

The signal sequence occupies residues 1 to 21 (MKTLLLTLVVVTIMCLDLGYT). 5 disulfides stabilise this stretch: Cys-24–Cys-43, Cys-36–Cys-64, Cys-49–Cys-53, Cys-68–Cys-79, and Cys-80–Cys-85.

This sequence belongs to the three-finger toxin family. Long-chain subfamily. Type II alpha-neurotoxin sub-subfamily. Expressed by the venom gland.

Its subcellular location is the secreted. In terms of biological role, binds with high affinity to muscular (alpha-1/CHRNA1) and neuronal (alpha-7/CHRNA7) nicotinic acetylcholine receptor (nAChR) and inhibits acetylcholine from binding to the receptor, thereby impairing neuromuscular and neuronal transmission. The sequence is that of Long neurotoxin LNTX8 from Ophiophagus hannah (King cobra).